The following is a 419-amino-acid chain: MAASTTCPARSMASVSRALRPRPHAAIASAAVRTAARLGGGLGIVCSMPSYGRKEKEEWGLTIASAPATTAAPALRSCQLLCKAEANISSNLPESIPSEANQYEKIVELLTTLFPVWVILGTIIGIYKPSMVTWLETDLFTVGLGFLMLSMGLTLTFEDFRRCMRNPWTVGVGFLAQYLIKPMLGFAIAMTLKLSAPLATGLILVSCCPGGQASNVATYISKGNVALSVLMTTCSTIGAIVMTPLLTKLLAGQLVPVDAAGLAISTFQVVLLPTIVGVLAHEYFPKFTERIISITPLIGVLLTTLLCASPIGQVSEVLKAQGGQLIIPVALLHVAAFALGYWLSKVSSFGESTSRTISIECGMQSSALGFLLAQKHFTNPLVAVPSAVSVVCMALGGSALAVFWRNRGLPANDKDDFKE.

A chloroplast-targeting transit peptide spans 1-45; the sequence is MAASTTCPARSMASVSRALRPRPHAAIASAAVRTAARLGGGLGIV. 9 helical membrane passes run 106–126, 137–157, 170–190, 194–214, 225–245, 259–279, 291–311, 323–343, and 384–404; these read IVELLTTLFPVWVILGTIIGI, TDLFTVGLGFLMLSMGLTLTF, VGVGFLAQYLIKPMLGFAIAM, LSAPLATGLILVSCCPGGQAS, VALSVLMTTCSTIGAIVMTPL, AAGLAISTFQVVLLPTIVGVL, IISITPLIGVLLTTLLCASPI, GQLIIPVALLHVAAFALGYWL, and VPSAVSVVCMALGGSALAVFW.

Belongs to the bile acid:sodium symporter (BASS) (TC 2.A.28) family.

It localises to the membrane. It is found in the plastid. Its subcellular location is the chloroplast envelope. Functionally, may function as sodium-coupled metabolite transporter across the chloroplast envelope. This Oryza sativa subsp. japonica (Rice) protein is Probable sodium/metabolite cotransporter BASS2, chloroplastic (BASS2).